Reading from the N-terminus, the 105-residue chain is UPF0122 protein OB1530 (105 aa).

Belongs to the UPF0122 family.

In terms of biological role, might take part in the signal recognition particle (SRP) pathway. This is inferred from the conservation of its genetic proximity to ftsY/ffh. May be a regulatory protein. This is UPF0122 protein OB1530 from Oceanobacillus iheyensis (strain DSM 14371 / CIP 107618 / JCM 11309 / KCTC 3954 / HTE831).